A 188-amino-acid polypeptide reads, in one-letter code: Threonylcarbamoyl-AMP synthase (188 aa).

A YrdC-like domain is found at 3 to 188 (QLQPSAVATT…RSGQILRNGS (186 aa)).

It belongs to the SUA5 family. TsaC subfamily.

It is found in the cytoplasm. The catalysed reaction is L-threonine + hydrogencarbonate + ATP = L-threonylcarbamoyladenylate + diphosphate + H2O. In terms of biological role, required for the formation of a threonylcarbamoyl group on adenosine at position 37 (t(6)A37) in tRNAs that read codons beginning with adenine. Catalyzes the conversion of L-threonine, HCO(3)(-)/CO(2) and ATP to give threonylcarbamoyl-AMP (TC-AMP) as the acyladenylate intermediate, with the release of diphosphate. The polypeptide is Threonylcarbamoyl-AMP synthase (Shewanella frigidimarina (strain NCIMB 400)).